Reading from the N-terminus, the 298-residue chain is MNALTLPDVAAQAARQALPLEWVGMCGIALPVFIEGQRLAAKADAGVSLDDGDARGIHMSRLYLGLEAMEQQNLSPALLRQVLQRFLDSHEDLSEAAYLNIHIDLLLRRPALVSPLAGWKNYPVTVSAQLKNKVFHVELKIDVAYSSTCPCSAALARQLIQQQFVDDFANKPLQHADVLAWLGSTQGIVATPHSQRSTAQLHLHLDEFVDELPLTSIINDAEAALGTAVQTAVKRADEQAFALANGQNLMFCEDAARRLNLALRGSPGISQFHVRVIHAESLHAHDAVAESHWRREQP.

This sequence belongs to the GTP cyclohydrolase IV family.

It carries out the reaction GTP + H2O = 7,8-dihydroneopterin 3'-triphosphate + formate + H(+). The protein operates within cofactor biosynthesis; 7,8-dihydroneopterin triphosphate biosynthesis; 7,8-dihydroneopterin triphosphate from GTP: step 1/1. Converts GTP to 7,8-dihydroneopterin triphosphate. In Pseudomonas fluorescens (strain Pf0-1), this protein is GTP cyclohydrolase FolE2.